The following is a 657-amino-acid chain: Autophagy-related protein 22 (657 aa).

The segment covering 1 to 15 has biased composition (low complexity); the sequence is MAPNLQPQPQSQLQR. Positions 1–78 are disordered; the sequence is MAPNLQPQPQ…VVPRHFGHDA (78 aa). At 1 to 91 the chain is on the cytoplasmic side; the sequence is MAPNLQPQPQ…SRRELLGWYA (91 aa). Polar residues predominate over residues 26 to 40; that stretch reads GLSNISKRSFRSCAT. A helical membrane pass occupies residues 92–112; sequence YAFAAETYVICGIASFIPILL. The Vacuolar segment spans residues 113–155; it reads ETLARENGVLVSDRKTPCGSSDSKNDGDGQCIVWVFGMEINTA. A helical transmembrane segment spans residues 156–176; sequence SFAMYTFSVSVLVQALLVVSI. Over 177-187 the chain is Cytoplasmic; that stretch reads SCAADHGNYRK. The chain crosses the membrane as a helical span at residues 188–208; the sequence is KLLLTFAWIGSFAVMSYIFIT. Residues 209–212 are Vacuolar-facing; sequence KDNY. Residues 213-233 form a helical membrane-spanning segment; that stretch reads ILGALLTVISNTSFGASFVLL. The Cytoplasmic segment spans residues 234 to 317; the sequence is NSFLPLLVRY…ELELSTRISA (84 aa). A helical transmembrane segment spans residues 318–338; that stretch reads IGIGTGYIAALFLQCICIGVL. The Vacuolar segment spans residues 339–349; it reads ISLHNTTWGQR. N-linked (GlcNAc...) asparagine glycosylation occurs at asparagine 343. A helical transmembrane segment spans residues 350–370; it reads VVLFMVGVWWTVFTIPAAMWL. At 371-384 the chain is on the cytoplasmic side; it reads RPRPGPPLADNGRK. The chain crosses the membrane as a helical span at residues 385 to 405; the sequence is GIMAGLAYILYAWKSLFKTIQ. The Vacuolar portion of the chain corresponds to 406-409; sequence QARR. Residues 410–430 traverse the membrane as a helical segment; the sequence is LLDIVLFLAGWFLLSDAIATT. Residues 431 to 446 lie on the Cytoplasmic side of the membrane; sequence SSTAILFAKTQLHMKP. The chain crosses the membrane as a helical span at residues 447-467; it reads WALGMINVISTTAGVFGAFGW. Residues 468–481 lie on the Vacuolar side of the membrane; it reads SWVSRLFNLKAHQT. Residues 482 to 502 form a helical membrane-spanning segment; that stretch reads ILVCIALFELIPLYGLLGYLP. At 503–515 the chain is on the cytoplasmic side; that stretch reads FVKNWGVFGLQQP. The chain crosses the membrane as a helical span at residues 516-536; sequence WEMYPLAAVYGVVLGGLSGYC. Over 537–554 the chain is Vacuolar; sequence RSLYGELIPPGSEAAFYA. The helical transmembrane segment at 555–575 threads the bilayer; that stretch reads LYAITDKGSSVFGPTIVGAII. Residues 576 to 583 are Cytoplasmic-facing; that stretch reads DRTGTIRP. The helical transmembrane segment at 584–604 threads the bilayer; sequence AFWFLAVLVGFPAPLIWFIDV. Over 605 to 657 the chain is Vacuolar; sequence ERGRREGAKLAKSITDSIVQEEDESDDGAERRGMLSDYEREHGQSIDDERAGR. The segment at 615–657 is disordered; sequence AKSITDSIVQEEDESDDGAERRGMLSDYEREHGQSIDDERAGR. A compositionally biased stretch (basic and acidic residues) spans 632–657; sequence GAERRGMLSDYEREHGQSIDDERAGR.

Belongs to the ATG22 family.

It is found in the vacuole membrane. Functionally, vacuolar effluxer which mediate the efflux of leucine and other amino acids resulting from autophagic degradation. The release of autophagic amino acids allows the maintenance of protein synthesis and viability during nitrogen starvation. Autophagy is required for proper vegetative growth, asexual/sexual reproduction, and full virulence. Autophagy is particularly involved in the biosynthesis of deoxynivalenol (DON), an important virulence determinant. This Gibberella zeae (strain ATCC MYA-4620 / CBS 123657 / FGSC 9075 / NRRL 31084 / PH-1) (Wheat head blight fungus) protein is Autophagy-related protein 22.